A 463-amino-acid polypeptide reads, in one-letter code: Cysteine--tRNA ligase (463 aa).

C29 contacts Zn(2+). Residues M31–H41 carry the 'HIGH' region motif. C218, H243, and E247 together coordinate Zn(2+). Residues K275–S279 carry the 'KMSKS' region motif. K278 contacts ATP.

It belongs to the class-I aminoacyl-tRNA synthetase family. As to quaternary structure, monomer. The cofactor is Zn(2+).

The protein resides in the cytoplasm. The enzyme catalyses tRNA(Cys) + L-cysteine + ATP = L-cysteinyl-tRNA(Cys) + AMP + diphosphate. The protein is Cysteine--tRNA ligase of Polaromonas naphthalenivorans (strain CJ2).